The following is a 350-amino-acid chain: Phosphotriesterase-related protein (350 aa).

A divalent metal cation contacts are provided by His22, His24, Glu169, His201, His230, and Asp298.

Belongs to the metallo-dependent hydrolases superfamily. Phosphotriesterase family. Requires a divalent metal cation as cofactor.

The chain is Phosphotriesterase-related protein from Drosophila willistoni (Fruit fly).